We begin with the raw amino-acid sequence, 61 residues long: Probable tautomerase SMU_1087 (61 aa).

Pro-2 (proton acceptor; via imino nitrogen) is an active-site residue.

It belongs to the 4-oxalocrotonate tautomerase family.

This Streptococcus mutans serotype c (strain ATCC 700610 / UA159) protein is Probable tautomerase SMU_1087.